Consider the following 382-residue polypeptide: MDNLFTFLHEIEDRYARTIFNFHLISCDEIGDIYGLMKERISSEDMFDNVVYNKDIHPAIKKLVYCDIQLTKHIINQNTYPVFNDSSQVKCCHYFDINSDNSNISSRTVEIFEREKSSLVSYIKTTNKKRKVNYGEIKKTVHGGTNANYFSGKKSDEYLSTTVRSNINQPWIKTISKRMRVDIINHSIVTRGKSSILQTIEIIFTNRTCVKIFKDSTMHIILSKDNDEKGCIHMIDKLFYVYYNLFLLFEDIIQNEYFKEVANVVNHVLTATALDEKLFLIKKMAEHDVYGVSNFKIGMFNLTFIKSLDHTVFPSLLDEDSKIKFFKGKKLNIVALRSLEDCINYVTKSENMIEMMKERSTILNSIDIETESVDRLKDLLLK.

Belongs to the poxviruses A23 family. As to quaternary structure, heterodimer of a 45 kDa and a 32 kDa subunit.

Functionally, acts with RNA polymerase to initiate transcription from intermediate gene promoters. This Camelus protein is Intermediate transcription factor 3 large subunit (VITF3L).